A 501-amino-acid polypeptide reads, in one-letter code: Cytochrome P450 2S1 (501 aa).

Cys-441 contributes to the heme binding site.

It belongs to the cytochrome P450 family. The cofactor is heme.

It localises to the endoplasmic reticulum membrane. The protein resides in the microsome membrane. It carries out the reaction all-trans-retinoate + reduced [NADPH--hemoprotein reductase] + O2 = all-trans-5,6-epoxyretinoate + oxidized [NADPH--hemoprotein reductase] + H2O + H(+). The enzyme catalyses all-trans-retinoate + reduced [NADPH--hemoprotein reductase] + O2 = all-trans-4-hydroxyretinoate + oxidized [NADPH--hemoprotein reductase] + H2O + H(+). The catalysed reaction is (5S)-hydroperoxy-(6E,8Z,11Z,14Z)-eicosatetraenoate = 5-oxo-(6E,8Z,11Z,14Z)-eicosatetraenoate + H2O. It catalyses the reaction (12S)-hydroperoxy-(5Z,8Z,10E,14Z)-eicosatetraenoate = 12-oxo-(5Z,8Z,10E,14Z)-eicosatetraenoate + H2O. It carries out the reaction (15S)-hydroperoxy-(5Z,8Z,11Z,13E)-eicosatetraenoate = 15-oxo-(5Z,8Z,11Z,13E)-eicosatetraenoate + H2O. The enzyme catalyses prostaglandin H2 = thromboxane A2. The catalysed reaction is prostaglandin H2 = (12S)-hydroxy-(5Z,8E,10E)-heptadecatrienoate + malonaldehyde. It catalyses the reaction (13S)-hydroperoxy-(9Z,11E)-octadecadienoate = 13-oxo-(9Z,11E)-octadecadienoate + H2O. It participates in lipid metabolism; fatty acid metabolism. Functionally, a cytochrome P450 monooxygenase involved in the metabolism of retinoids and eicosanoids. In epidermis, may contribute to the oxidative metabolism of all-trans-retinoic acid. For this activity, uses molecular oxygen inserting one oxygen atom into a substrate, and reducing the second into a water molecule, with two electrons provided by NADPH via cytochrome P450 reductase (NADPH--hemoprotein reductase). Additionally, displays peroxidase and isomerase activities toward various oxygenated eicosanoids such as prostaglandin H2 (PGH2) and hydroperoxyeicosatetraenoates (HPETEs). Independently of cytochrome P450 reductase, NADPH, and O2, catalyzes the breakdown of PGH2 to hydroxyheptadecatrienoic acid (HHT) and malondialdehyde (MDA), which is known to act as a mediator of DNA damage. The chain is Cytochrome P450 2S1 (Cyp2s1) from Mus musculus (Mouse).